The chain runs to 61 residues: Small ribosomal subunit protein uS14 (61 aa).

Zn(2+) contacts are provided by Cys-24, Cys-27, Cys-40, and Cys-43.

This sequence belongs to the universal ribosomal protein uS14 family. Zinc-binding uS14 subfamily. Part of the 30S ribosomal subunit. Contacts proteins S3 and S10. It depends on Zn(2+) as a cofactor.

Functionally, binds 16S rRNA, required for the assembly of 30S particles and may also be responsible for determining the conformation of the 16S rRNA at the A site. The polypeptide is Small ribosomal subunit protein uS14 (Clostridium perfringens (strain ATCC 13124 / DSM 756 / JCM 1290 / NCIMB 6125 / NCTC 8237 / Type A)).